The sequence spans 502 residues: Protein IWS1 homolog 1 (502 aa).

A compositionally biased stretch (basic and acidic residues) spans 1–12 (MGFEDDPYRDVD). 2 disordered regions span residues 1 to 61 (MGFE…DNDK) and 87 to 208 (DEDV…DEDE). 3 stretches are compositionally biased toward acidic residues: residues 13-22 (GEPIVDFDDF), 34-49 (QDFD…DWDG), and 87-97 (DEDVDDAEFDE). 2 stretches are compositionally biased toward basic and acidic residues: residues 138–151 (NRGE…DEMW) and 181–194 (PSER…DRSP). At Y185 the chain carries Phosphotyrosine. Residues 287–370 (TLLKNWLEPL…DKWSRPIFNK (84 aa)) form the TFIIS N-terminal domain. Residues 385 to 434 (VPYRRPPVKKPSNKATMESRDGDFDLEIRERKTGLTSGQSSRGDRQMTMR) form a disordered region. The span at 401–417 (MESRDGDFDLEIRERKT) shows a compositional bias: basic and acidic residues.

Belongs to the IWS1 family. Interacts with BZR2/BES1 and SPT6 (via N-terminus). Interacts with ASHH2/SDG8.

It is found in the nucleus. Its function is as follows. Transcription factor involved in RNA polymerase II (RNAPII) transcription regulation. Involved in transcription elongation. May function at post-recruitment and elongation steps of transcription. May be recruited by BZR2/BES1 to target genes and promote their expression during transcription elongation process. Required for brassinosteroid (BR)-induced gene expression. Required the for regulation of numerous nitrogen-responsive genes in roots. Acts in roots to repress NRT2.1 transcription in response to high nitrogen supply. This repression is associated with an IWS1-dependent increase of trimethylation on 'Lys-27' H3K27me3 at the NRT2.1 locus. The protein is Protein IWS1 homolog 1 of Arabidopsis thaliana (Mouse-ear cress).